Reading from the N-terminus, the 100-residue chain is Urease subunit gamma (100 aa).

It belongs to the urease gamma subunit family. As to quaternary structure, heterotrimer of UreA (gamma), UreB (beta) and UreC (alpha) subunits. Three heterotrimers associate to form the active enzyme.

It is found in the cytoplasm. The enzyme catalyses urea + 2 H2O + H(+) = hydrogencarbonate + 2 NH4(+). It participates in nitrogen metabolism; urea degradation; CO(2) and NH(3) from urea (urease route): step 1/1. In Jannaschia sp. (strain CCS1), this protein is Urease subunit gamma.